We begin with the raw amino-acid sequence, 124 residues long: MPTINQLIRIGREDQKKRTKSPALKACPQRRGVCTRVMTFTPKKPNSALRKVARVRLTTGIEVTAYIPGEGHNLQEHNVVLIRGGRVKDLPGVRYHIIRGTLDTLGVDKRRKGRSKYGAKRPKA.

At Asp89 the chain carries 3-methylthioaspartic acid.

The protein belongs to the universal ribosomal protein uS12 family. As to quaternary structure, part of the 30S ribosomal subunit. Contacts proteins S8 and S17. May interact with IF1 in the 30S initiation complex.

With S4 and S5 plays an important role in translational accuracy. In terms of biological role, interacts with and stabilizes bases of the 16S rRNA that are involved in tRNA selection in the A site and with the mRNA backbone. Located at the interface of the 30S and 50S subunits, it traverses the body of the 30S subunit contacting proteins on the other side and probably holding the rRNA structure together. The combined cluster of proteins S8, S12 and S17 appears to hold together the shoulder and platform of the 30S subunit. The sequence is that of Small ribosomal subunit protein uS12 from Leptospira biflexa serovar Patoc (strain Patoc 1 / Ames).